Here is a 414-residue protein sequence, read N- to C-terminus: Protein IQ-DOMAIN 8 (414 aa).

The Nuclear localization signal 1 signature appears at 14–21 (NKKNITDD). A disordered region spans residues 40–61 (LISSSKGFKSRGGSYGTPSLGS). IQ domains follow at residues 92 to 120 (REWAATRIQAAFRAFLARQALRALKAVVR), 121 to 143 (IQAIFRGRQVRKQADVTLRCMQA), and 144 to 169 (LVRVQARVRAHCNRGPSDGQELEKPS). The interval 119 to 132 (VRIQAIFRGRQVRK) is calmodulin-binding. 3 disordered regions span residues 156 to 190 (NRGPSDGQELEKPSDQQKDDPAKQAEKGWCDSPGS), 218 to 244 (HQPRTCPSPAKASKQGSVKKNNGSCKS), and 262 to 329 (GRLM…SGSF). The segment covering 164 to 184 (ELEKPSDQQKDDPAKQAEKGW) has biased composition (basic and acidic residues). Residues 231–244 (KQGSVKKNNGSCKS) are compositionally biased toward polar residues. Positions 274 to 289 (NARKSESSVSEHDTVQ) are enriched in basic and acidic residues. Residues 307–328 (SSSATSSESSSTSQSPVPFSGS) show a composition bias toward low complexity. The Nuclear localization signal 2 motif lies at 336-343 (YRKPSYMS). The disordered stretch occupies residues 347–398 (SIKAKQRRSGSSSSCSKTPFEKKQSMSYNGDVNVRRSAGSDPLNNQWTDLYP).

The protein belongs to the IQD family. Binds to multiple calmodulin (CaM) in the presence of Ca(2+) and CaM-like proteins.

It is found in the nucleus. The protein localises to the cytoplasm. Its subcellular location is the cytoskeleton. It localises to the nucleus envelope. Functionally, may be involved in cooperative interactions with calmodulins or calmodulin-like proteins. Recruits calmodulin proteins to microtubules, thus being a potential scaffold in cellular signaling and trafficking. May associate with nucleic acids and regulate gene expression at the transcriptional or post-transcriptional level. This is Protein IQ-DOMAIN 8 from Arabidopsis thaliana (Mouse-ear cress).